The primary structure comprises 583 residues: Ferredoxin--nitrite reductase, chloroplastic (583 aa).

The transit peptide at 1 to 22 (MSSLSVRFLSPPLFSSTPAWPR) directs the protein to the chloroplast. [4Fe-4S] cluster contacts are provided by cysteine 461, cysteine 467, cysteine 502, and cysteine 506. A siroheme-binding site is contributed by cysteine 506.

Belongs to the nitrite and sulfite reductase 4Fe-4S domain family. In terms of assembly, monomer. It depends on siroheme as a cofactor. [4Fe-4S] cluster is required as a cofactor.

It is found in the plastid. It localises to the chloroplast. It catalyses the reaction 6 oxidized [2Fe-2S]-[ferredoxin] + NH4(+) + 2 H2O = nitrite + 6 reduced [2Fe-2S]-[ferredoxin] + 8 H(+). Its pathway is nitrogen metabolism; nitrate reduction (assimilation). The protein is Ferredoxin--nitrite reductase, chloroplastic (NIR1) of Betula pendula (European white birch).